We begin with the raw amino-acid sequence, 251 residues long: Flap endonuclease Xni (251 aa).

Aspartate 104 contributes to the Mg(2+) binding site. The 90-residue stretch at 160–249 (VTPEQLADYW…LDGNLQQLRL (90 aa)) folds into the 5'-3' exonuclease domain. K(+) is bound by residues leucine 171, alanine 172, proline 180, valine 182, and isoleucine 185. The tract at residues 184-189 (GIGPKS) is interaction with DNA.

It belongs to the Xni family. Mg(2+) serves as cofactor. The cofactor is K(+).

Has flap endonuclease activity. During DNA replication, flap endonucleases cleave the 5'-overhanging flap structure that is generated by displacement synthesis when DNA polymerase encounters the 5'-end of a downstream Okazaki fragment. This chain is Flap endonuclease Xni, found in Klebsiella pneumoniae subsp. pneumoniae (strain ATCC 700721 / MGH 78578).